The chain runs to 338 residues: Ketol-acid reductoisomerase (NADP(+)) (338 aa).

Residues 1-181 enclose the KARI N-terminal Rossmann domain; that stretch reads MKVYYDKDAD…GGTKGGVIET (181 aa). Residues 24 to 27, Arg-47, and Ser-52 each bind NADP(+); that span reads YGSQ. His-107 is a catalytic residue. Gly-133 is a binding site for NADP(+). Residues 182–327 form the KARI C-terminal knotted domain; that stretch reads NFREETETDL…SQLRAMMPWI (146 aa). Mg(2+)-binding residues include Asp-190, Glu-194, Glu-226, and Glu-230. Substrate is bound at residue Ser-251.

The protein belongs to the ketol-acid reductoisomerase family. Mg(2+) serves as cofactor.

The catalysed reaction is (2R)-2,3-dihydroxy-3-methylbutanoate + NADP(+) = (2S)-2-acetolactate + NADPH + H(+). It carries out the reaction (2R,3R)-2,3-dihydroxy-3-methylpentanoate + NADP(+) = (S)-2-ethyl-2-hydroxy-3-oxobutanoate + NADPH + H(+). Its pathway is amino-acid biosynthesis; L-isoleucine biosynthesis; L-isoleucine from 2-oxobutanoate: step 2/4. It participates in amino-acid biosynthesis; L-valine biosynthesis; L-valine from pyruvate: step 2/4. Its function is as follows. Involved in the biosynthesis of branched-chain amino acids (BCAA). Catalyzes an alkyl-migration followed by a ketol-acid reduction of (S)-2-acetolactate (S2AL) to yield (R)-2,3-dihydroxy-isovalerate. In the isomerase reaction, S2AL is rearranged via a Mg-dependent methyl migration to produce 3-hydroxy-3-methyl-2-ketobutyrate (HMKB). In the reductase reaction, this 2-ketoacid undergoes a metal-dependent reduction by NADPH to yield (R)-2,3-dihydroxy-isovalerate. The protein is Ketol-acid reductoisomerase (NADP(+)) of Methylobacillus flagellatus (strain ATCC 51484 / DSM 6875 / VKM B-1610 / KT).